Reading from the N-terminus, the 163-residue chain is Phosphopantetheine adenylyltransferase (163 aa).

Thr10 lines the substrate pocket. ATP-binding positions include 10 to 11 (TF) and His18. Substrate contacts are provided by Lys42, Leu74, and Arg88. Residues 89 to 91 (GLR), Glu99, and 124 to 130 (NSFISST) contribute to the ATP site.

This sequence belongs to the bacterial CoaD family. As to quaternary structure, homohexamer. Mg(2+) is required as a cofactor.

Its subcellular location is the cytoplasm. The enzyme catalyses (R)-4'-phosphopantetheine + ATP + H(+) = 3'-dephospho-CoA + diphosphate. Its pathway is cofactor biosynthesis; coenzyme A biosynthesis; CoA from (R)-pantothenate: step 4/5. In terms of biological role, reversibly transfers an adenylyl group from ATP to 4'-phosphopantetheine, yielding dephospho-CoA (dPCoA) and pyrophosphate. The sequence is that of Phosphopantetheine adenylyltransferase from Shewanella putrefaciens (strain CN-32 / ATCC BAA-453).